The primary structure comprises 445 residues: Phosphoglucosamine mutase (445 aa).

Residue serine 102 is the Phosphoserine intermediate of the active site. Mg(2+) is bound by residues serine 102, aspartate 240, aspartate 242, and aspartate 244. Position 102 is a phosphoserine (serine 102).

The protein belongs to the phosphohexose mutase family. Mg(2+) is required as a cofactor. Post-translationally, activated by phosphorylation.

It carries out the reaction alpha-D-glucosamine 1-phosphate = D-glucosamine 6-phosphate. Catalyzes the conversion of glucosamine-6-phosphate to glucosamine-1-phosphate. The sequence is that of Phosphoglucosamine mutase from Mycobacterium sp. (strain JLS).